The following is a 62-amino-acid chain: Toxin Tb2 (62 aa).

The region spanning 1 to 62 (KEGYAMDHEG…KVWDYATNKC (62 aa)) is the LCN-type CS-alpha/beta domain. Intrachain disulfides connect Cys11–Cys62, Cys15–Cys38, Cys23–Cys43, and Cys27–Cys45. Cys62 carries the cysteine amide modification.

It belongs to the long (4 C-C) scorpion toxin superfamily. Sodium channel inhibitor family. Beta subfamily. In terms of tissue distribution, expressed by the venom gland.

Its subcellular location is the secreted. Beta toxins bind voltage-independently at site-4 of sodium channels (Nav) and shift the voltage of activation toward more negative potentials thereby affecting sodium channel activation and promoting spontaneous and repetitive firing. This toxin is active on mammals. The sequence is that of Toxin Tb2 from Tityus bahiensis (Brazilian scorpion).